The sequence spans 32 residues: Tail virion protein G7P (32 aa).

Residues 8–28 form a helical membrane-spanning segment; that stretch reads IIYVVFALGLVVSFGLGAITA.

Belongs to the inovirus G7P protein family.

Its subcellular location is the virion. The protein localises to the host membrane. Its function is as follows. May initiate with G9P the virion concomitant assembly-budding process, by interacting with the packaging signal of the viral genome. The assembly-budding takes place at the host inner membrane. In turn, G7P and G9P are present at the end of the filamentous virion that emerges first from the bacterial host. The chain is Tail virion protein G7P (VII) from Escherichia coli (Bacteriophage IKe).